The sequence spans 478 residues: ATP synthase subunit beta (478 aa).

158-165 (GGAGVGKT) serves as a coordination point for ATP.

The protein belongs to the ATPase alpha/beta chains family. In terms of assembly, F-type ATPases have 2 components, CF(1) - the catalytic core - and CF(0) - the membrane proton channel. CF(1) has five subunits: alpha(3), beta(3), gamma(1), delta(1), epsilon(1). CF(0) has three main subunits: a(1), b(2) and c(9-12). The alpha and beta chains form an alternating ring which encloses part of the gamma chain. CF(1) is attached to CF(0) by a central stalk formed by the gamma and epsilon chains, while a peripheral stalk is formed by the delta and b chains.

Its subcellular location is the cell inner membrane. The enzyme catalyses ATP + H2O + 4 H(+)(in) = ADP + phosphate + 5 H(+)(out). Functionally, produces ATP from ADP in the presence of a proton gradient across the membrane. The catalytic sites are hosted primarily by the beta subunits. This Rhizobium johnstonii (strain DSM 114642 / LMG 32736 / 3841) (Rhizobium leguminosarum bv. viciae) protein is ATP synthase subunit beta.